The primary structure comprises 505 residues: Cyanidin 3-O-glucoside 7-O-glucosyltransferase (acyl-glucose) (505 aa).

A signal peptide spans 1–25 (MCPSFLVTLLLLQLSSLVVVLVVWA). A beta-D-glucoside-binding positions include glutamine 52, histidine 152, and 197-198 (NE). Catalysis depends on glutamate 198, which acts as the Proton donor. Cysteine 217 and cysteine 225 are disulfide-bonded. N-linked (GlcNAc...) asparagine glycans are attached at residues asparagine 224, asparagine 229, and asparagine 324. Residues tyrosine 341 and glutamate 403 each coordinate a beta-D-glucoside. Residue glutamate 403 is the Nucleophile of the active site. Residues asparagine 411 and asparagine 437 are each glycosylated (N-linked (GlcNAc...) asparagine). A beta-D-glucoside is bound by residues tryptophan 447 and tyrosine 463. A glycan (N-linked (GlcNAc...) asparagine) is linked at asparagine 494.

It belongs to the glycosyl hydrolase 1 family.

The protein resides in the vacuole. It carries out the reaction 1-O-(4-hydroxy-3-methoxybenzoyl)-beta-D-glucose + cyanidin 3-O-beta-D-glucoside = cyanidin 3,7-di-O-beta-D-glucoside + vanillate. It participates in pigment biosynthesis; anthocyanin biosynthesis. In terms of biological role, beta-glycosidase that catalyzes the transfer of glucose moiety to anthocyanidin 3-glucoside at the 7 position. Anthocyanins are ubiquitous colored pigments that are responsible for variations in petal color. The chain is Cyanidin 3-O-glucoside 7-O-glucosyltransferase (acyl-glucose) (AA7GT) from Delphinium grandiflorum (Siberian larkspur).